The following is a 142-amino-acid chain: Deoxyuridine 5'-triphosphate nucleotidohydrolase (142 aa).

Substrate is bound by residues 62–64 (RSG), asparagine 75, and 79–81 (TID).

This sequence belongs to the dUTPase family. Mg(2+) is required as a cofactor.

The enzyme catalyses dUTP + H2O = dUMP + diphosphate + H(+). It functions in the pathway pyrimidine metabolism; dUMP biosynthesis; dUMP from dCTP (dUTP route): step 2/2. Its function is as follows. This enzyme is involved in nucleotide metabolism: it produces dUMP, the immediate precursor of thymidine nucleotides and it decreases the intracellular concentration of dUTP so that uracil cannot be incorporated into DNA. In Picosynechococcus sp. (strain ATCC 27264 / PCC 7002 / PR-6) (Agmenellum quadruplicatum), this protein is Deoxyuridine 5'-triphosphate nucleotidohydrolase.